A 168-amino-acid chain; its full sequence is Shikimate kinase (168 aa).

Residue 12 to 17 (GAGKST) coordinates ATP. Ser-16 serves as a coordination point for Mg(2+). Residues Asp-34, Arg-58, and Gly-80 each coordinate substrate. Residue Arg-117 participates in ATP binding. Position 136 (Arg-136) interacts with substrate. Arg-153 provides a ligand contact to ATP.

It belongs to the shikimate kinase family. In terms of assembly, monomer. Mg(2+) serves as cofactor.

It is found in the cytoplasm. The enzyme catalyses shikimate + ATP = 3-phosphoshikimate + ADP + H(+). The protein operates within metabolic intermediate biosynthesis; chorismate biosynthesis; chorismate from D-erythrose 4-phosphate and phosphoenolpyruvate: step 5/7. Functionally, catalyzes the specific phosphorylation of the 3-hydroxyl group of shikimic acid using ATP as a cosubstrate. In Rhodococcus jostii (strain RHA1), this protein is Shikimate kinase.